Consider the following 408-residue polypeptide: Succinylornithine transaminase (408 aa).

Residue Lys-252 is modified to N6-(pyridoxal phosphate)lysine.

It belongs to the class-III pyridoxal-phosphate-dependent aminotransferase family. AstC subfamily. Requires pyridoxal 5'-phosphate as cofactor.

It catalyses the reaction N(2)-succinyl-L-ornithine + 2-oxoglutarate = N-succinyl-L-glutamate 5-semialdehyde + L-glutamate. Its pathway is amino-acid degradation; L-arginine degradation via AST pathway; L-glutamate and succinate from L-arginine: step 3/5. In terms of biological role, catalyzes the transamination of N(2)-succinylornithine and alpha-ketoglutarate into N(2)-succinylglutamate semialdehyde and glutamate. Can also act as an acetylornithine aminotransferase. This Salmonella newport (strain SL254) protein is Succinylornithine transaminase.